Reading from the N-terminus, the 404-residue chain is Cysteine desulfurase IscS (404 aa).

Pyridoxal 5'-phosphate is bound by residues 75–76 (AT), Asn-155, Gln-183, and 203–205 (SAH). Lys-206 carries the post-translational modification N6-(pyridoxal phosphate)lysine. Thr-243 lines the pyridoxal 5'-phosphate pocket. The active-site Cysteine persulfide intermediate is Cys-328. A [2Fe-2S] cluster-binding site is contributed by Cys-328.

It belongs to the class-V pyridoxal-phosphate-dependent aminotransferase family. NifS/IscS subfamily. Homodimer. Forms a heterotetramer with IscU, interacts with other sulfur acceptors. Pyridoxal 5'-phosphate is required as a cofactor.

The protein resides in the cytoplasm. The catalysed reaction is (sulfur carrier)-H + L-cysteine = (sulfur carrier)-SH + L-alanine. It functions in the pathway cofactor biosynthesis; iron-sulfur cluster biosynthesis. In terms of biological role, master enzyme that delivers sulfur to a number of partners involved in Fe-S cluster assembly, tRNA modification or cofactor biosynthesis. Catalyzes the removal of elemental sulfur atoms from cysteine to produce alanine. Functions as a sulfur delivery protein for Fe-S cluster synthesis onto IscU, an Fe-S scaffold assembly protein, as well as other S acceptor proteins. This is Cysteine desulfurase IscS from Vibrio vulnificus (strain YJ016).